We begin with the raw amino-acid sequence, 285 residues long: Protease HtpX homolog (285 aa).

The next 2 helical transmembrane spans lie at 7-27 (TAML…MIGG) and 30-50 (GMTI…WFSD). H131 lines the Zn(2+) pocket. The active site involves E132. Position 135 (H135) interacts with Zn(2+). Helical transmembrane passes span 141-161 (ILIS…ANFA) and 177-197 (IAGI…QMAI). Residue E202 participates in Zn(2+) binding.

Belongs to the peptidase M48B family. Requires Zn(2+) as cofactor.

It localises to the cell inner membrane. The polypeptide is Protease HtpX homolog (Paraburkholderia phytofirmans (strain DSM 17436 / LMG 22146 / PsJN) (Burkholderia phytofirmans)).